The following is a 150-amino-acid chain: Monothiol glutaredoxin-5, mitochondrial (150 aa).

The N-terminal 29 residues, 1 to 29 (MFLPKFNPIRSFSPILRAKTLLRYQNRMY), are a transit peptide targeting the mitochondrion. A Glutaredoxin domain is found at 35 to 140 (RKAIEDAIES…DLLEEAQALV (106 aa)). Lysine 52 is a binding site for glutathione. Cysteine 60 is a binding site for [2Fe-2S] cluster. Glutathione is bound by residues 92-96 (REGIK), isoleucine 104, and 117-118 (CD).

The protein belongs to the glutaredoxin family. Monothiol subfamily. In terms of assembly, homodimer. Interacts with SSQ1. Interacts with BOL1.

It localises to the mitochondrion matrix. Functionally, monothiol glutaredoxin involved in mitochondrial iron-sulfur (Fe/S) cluster transfer. Receives 2Fe/2S clusters from scaffold protein ISU1 and mediates their transfer to apoproteins, to the 4Fe/FS cluster biosynthesis machinery, or export from mitochondrion. This Saccharomyces cerevisiae (strain ATCC 204508 / S288c) (Baker's yeast) protein is Monothiol glutaredoxin-5, mitochondrial.